A 411-amino-acid chain; its full sequence is uncharacterized protein (411 aa).

This is an uncharacterized protein from Mycoplasma genitalium (strain ATCC 33530 / DSM 19775 / NCTC 10195 / G37) (Mycoplasmoides genitalium).